The primary structure comprises 257 residues: uncharacterized protein (257 aa).

The helical transmembrane segment at 6–26 (IFWLNLAAIIIISIVVSGDMF) threads the bilayer.

The protein belongs to the staphylococcal tandem lipoprotein family.

The protein resides in the cell membrane. This is an uncharacterized protein from Staphylococcus aureus (strain COL).